A 142-amino-acid chain; its full sequence is Large ribosomal subunit protein uL13 (142 aa).

Belongs to the universal ribosomal protein uL13 family. In terms of assembly, part of the 50S ribosomal subunit.

Its function is as follows. This protein is one of the early assembly proteins of the 50S ribosomal subunit, although it is not seen to bind rRNA by itself. It is important during the early stages of 50S assembly. This is Large ribosomal subunit protein uL13 from Shigella sonnei (strain Ss046).